Reading from the N-terminus, the 366-residue chain is Outer membrane protein IIIA (366 aa).

Residues Met1–Ala22 form the signal peptide.

Belongs to the alphaproteobacteria porin family. As to quaternary structure, forms calcium-stabilized oligomers. Post-translationally, attached covalently to peptidoglycan.

The protein localises to the cell outer membrane. In terms of biological role, may act as an outer membrane pore. The chain is Outer membrane protein IIIA (ropA) from Rhizobium leguminosarum bv. viciae.